Here is a 92-residue protein sequence, read N- to C-terminus: MARSIWKGPFVDGYLIKKVQKLMKSGKSEMIKTWSRRSTILPIFVGFTFSVHNGNKFIPVYINEEMVGRKLGEFAPTRTFHGHGADKKVKRK.

Belongs to the universal ribosomal protein uS19 family.

In terms of biological role, protein S19 forms a complex with S13 that binds strongly to the 16S ribosomal RNA. The chain is Small ribosomal subunit protein uS19 (rpsS) from Rickettsia prowazekii (strain Madrid E).